Consider the following 525-residue polypeptide: Protein shisa-6 (525 aa).

A signal peptide spans 1–30 (MALRRLLLPPLLLSLLLSLASLHLPPGADA). At 31 to 180 (ARGRSGNRTL…NKYDPEKDKT (150 aa)) the chain is on the extracellular side. Asparagine 37 and asparagine 62 each carry an N-linked (GlcNAc...) asparagine glycan. The helical transmembrane segment at 181-201 (NFTVYITCGVIAFVIVAGVFA) threads the bilayer. At 202–525 (KVSYDKAHRP…YTASKTEVTV (324 aa)) the chain is on the cytoplasmic side. Residues 241 to 294 (ISAIDTSPKENTPVRSTSKNHYTPVRTAKQTPGDRQYNHPILSSATQTPTHEKP) are disordered. Polar residues predominate over residues 243–261 (AIDTSPKENTPVRSTSKNH). Serine 416, serine 422, and serine 434 each carry phosphoserine. At threonine 458 the chain carries Phosphothreonine. Positions 469–495 (MHSHPSASNNSYATLGQSQTAAKRHAF) are disordered. The segment covering 473–489 (PSASNNSYATLGQSQTA) has biased composition (polar residues). The residue at position 502 (threonine 502) is a Phosphothreonine. Residues 522-525 (EVTV) carry the PDZ-binding motif.

Belongs to the shisa family. Component of the postsynaptic hippocampal AMPA-type glutamate receptor (AMPAR) complex, at least composed of pore forming AMPAR subunits GRIA1, GRIA2 and GRIA3 and AMPAR auxiliary proteins SHISA6 and SHISA7. Interacts (via PDZ-binding motif) with DLG4/PSD-95 (via PDZ domain); the interaction is direct. Post-translationally, N-glycosylated. Highly expressed in cerebellum and hippocampal neurons: CA1 stratum oriens and stratum radiatum, CA3 stratum oriens and stratum lucidum, and the dentate gyrus polymorphic layer. Expressed in other brain structures including olfactory bulb, cortex, amygdala and midbrain (at protein level). Also expressed in a subset of spermatogonial stem cells. Also expressed in eye, heart, kidney, lung, muscle and spleen. Isoform 2: Specifically expressed in hippocampus.

It is found in the postsynaptic density membrane. In terms of biological role, involved in maintenance of high-frequency synaptic transmission at hippocampal CA3-CA1 synapses. Regulates AMPA-type glutamate receptor (AMPAR) immobilization at postsynaptic density keeping the channels in an activated state in the presence of glutamate and preventing synaptic depression. May play a role in self-renewal and differentiation of spermatogonial stem cells by inhibiting canonical Wnt signaling pathway. The chain is Protein shisa-6 from Mus musculus (Mouse).